A 215-amino-acid polypeptide reads, in one-letter code: Superoxide dismutase [Mn] (215 aa).

Mn(2+) contacts are provided by His27, His83, Asp170, and His174.

This sequence belongs to the iron/manganese superoxide dismutase family. Homodimer. The cofactor is Mn(2+).

It carries out the reaction 2 superoxide + 2 H(+) = H2O2 + O2. Destroys superoxide anion radicals which are normally produced within the cells and which are toxic to biological systems. In Haemophilus influenzae (strain ATCC 51907 / DSM 11121 / KW20 / Rd), this protein is Superoxide dismutase [Mn] (sodA).